The chain runs to 93 residues: Co-chaperonin GroES (93 aa).

This sequence belongs to the GroES chaperonin family. As to quaternary structure, heptamer of 7 subunits arranged in a ring. Interacts with the chaperonin GroEL.

Its subcellular location is the cytoplasm. In terms of biological role, together with the chaperonin GroEL, plays an essential role in assisting protein folding. The GroEL-GroES system forms a nano-cage that allows encapsulation of the non-native substrate proteins and provides a physical environment optimized to promote and accelerate protein folding. GroES binds to the apical surface of the GroEL ring, thereby capping the opening of the GroEL channel. The sequence is that of Co-chaperonin GroES from Lacticaseibacillus paracasei (strain ATCC 334 / BCRC 17002 / CCUG 31169 / CIP 107868 / KCTC 3260 / NRRL B-441) (Lactobacillus paracasei).